We begin with the raw amino-acid sequence, 730 residues long: DNA ligase (730 aa).

Positions 1 to 23 (MAGEQHAQPTSVPAEAREKHAQL) are disordered. NAD(+)-binding positions include 44–48 (DAEFD), 93–94 (SL), and Glu124. The N6-AMP-lysine intermediate role is filled by Lys126. Positions 147, 184, 300, and 324 each coordinate NAD(+). Zn(2+)-binding residues include Cys418, Cys421, Cys437, and Cys443. Residues 638-727 (EGPRPLEGLT…PEAAAEVALP (90 aa)) enclose the BRCT domain.

Belongs to the NAD-dependent DNA ligase family. LigA subfamily. It depends on Mg(2+) as a cofactor. Requires Mn(2+) as cofactor.

It carries out the reaction NAD(+) + (deoxyribonucleotide)n-3'-hydroxyl + 5'-phospho-(deoxyribonucleotide)m = (deoxyribonucleotide)n+m + AMP + beta-nicotinamide D-nucleotide.. Its function is as follows. DNA ligase that catalyzes the formation of phosphodiester linkages between 5'-phosphoryl and 3'-hydroxyl groups in double-stranded DNA using NAD as a coenzyme and as the energy source for the reaction. It is essential for DNA replication and repair of damaged DNA. This is DNA ligase from Streptomyces avermitilis (strain ATCC 31267 / DSM 46492 / JCM 5070 / NBRC 14893 / NCIMB 12804 / NRRL 8165 / MA-4680).